The following is a 385-amino-acid chain: MNHLRAEGPASVLAIGTANPENILIQDEFPDYYFRVTKSEHMTQLKEKFRKICDKSMIRKRNIFLNEEHLKQNPKLVEHDVQTLDARQDMLVVEVPKLGKDACAKAIKEWGQPKSKITHLIFTSASTTDMPGADYHCAKLLGLSPSVKRVMMYQLGCYGGGTVLRIAKDIAENNKGARVLAVCCDIMACLFRGPSDSDLELLVGQAIFGDGAAAVIVGAEPDESVGERPIFELVSTGQTILPNSEGTIGGHIREAGLIFDLHKDVPMLISNNIEKCLIEAFTPIGISDWNSIFWITHPGGKAILDKVEEKLHLKSDKFVDSRHVLSEHGNMSSSTVLFVMDELRKRSLEEGKSTTGDGFEWGVLFGFGPGLTVERVVVRSVPIKY.

Cys157 is a catalytic residue.

Belongs to the thiolase-like superfamily. Chalcone/stilbene synthases family. Expressed in glandular trichomes.

Its subcellular location is the cytoplasm. In terms of biological role, polyketide synthase responsible for the biosynthesis of secondary metabolites. The protein is Polyketide synthase 1 (PKSG1) of Cannabis sativa (Hemp).